The chain runs to 228 residues: Octanoyltransferase (228 aa).

One can recognise a BPL/LPL catalytic domain in the interval 31-212; that stretch reads GETDGILILL…KFSEVFGIHF (182 aa). Substrate contacts are provided by residues 76–83, 143–145, and 156–158; these read RGGKITFH, AIG, and GIA. The active-site Acyl-thioester intermediate is the Cys-174.

It belongs to the LipB family.

Its subcellular location is the cytoplasm. It carries out the reaction octanoyl-[ACP] + L-lysyl-[protein] = N(6)-octanoyl-L-lysyl-[protein] + holo-[ACP] + H(+). The protein operates within protein modification; protein lipoylation via endogenous pathway; protein N(6)-(lipoyl)lysine from octanoyl-[acyl-carrier-protein]: step 1/2. In terms of biological role, catalyzes the transfer of endogenously produced octanoic acid from octanoyl-acyl-carrier-protein onto the lipoyl domains of lipoate-dependent enzymes. Lipoyl-ACP can also act as a substrate although octanoyl-ACP is likely to be the physiological substrate. The sequence is that of Octanoyltransferase from Thermoanaerobacter sp. (strain X514).